A 657-amino-acid polypeptide reads, in one-letter code: Threonine--tRNA ligase (657 aa).

The 64-residue stretch at 7 to 70 folds into the TGS domain; it reads SQTQVTVTLP…SEDASIEIVT (64 aa). The tract at residues 253–555 is catalytic; that stretch reads DHRKLGAELE…LIEHTGGNFP (303 aa). Residues C351, H402, and H532 each contribute to the Zn(2+) site.

Belongs to the class-II aminoacyl-tRNA synthetase family. As to quaternary structure, homodimer. Zn(2+) serves as cofactor.

It is found in the cytoplasm. It catalyses the reaction tRNA(Thr) + L-threonine + ATP = L-threonyl-tRNA(Thr) + AMP + diphosphate + H(+). Functionally, catalyzes the attachment of threonine to tRNA(Thr) in a two-step reaction: L-threonine is first activated by ATP to form Thr-AMP and then transferred to the acceptor end of tRNA(Thr). Also edits incorrectly charged L-seryl-tRNA(Thr). This chain is Threonine--tRNA ligase, found in Prosthecochloris aestuarii (strain DSM 271 / SK 413).